Consider the following 177-residue polypeptide: Archaemetzincin (177 aa).

His-129 provides a ligand contact to Zn(2+). Residue Glu-130 is the Proton acceptor of the active site. Zn(2+) is bound by residues His-133, His-139, Cys-140, Cys-145, Cys-164, and Cys-167.

Belongs to the peptidase M54 family. As to quaternary structure, monomer. Zn(2+) is required as a cofactor.

Its function is as follows. Probable zinc metalloprotease whose natural substrate is unknown. The polypeptide is Archaemetzincin (Sulfolobus acidocaldarius (strain ATCC 33909 / DSM 639 / JCM 8929 / NBRC 15157 / NCIMB 11770)).